The sequence spans 171 residues: S-ribosylhomocysteine lyase (171 aa).

Fe cation-binding residues include His-54, His-58, and Cys-128.

Belongs to the LuxS family. Homodimer. Fe cation serves as cofactor.

It carries out the reaction S-(5-deoxy-D-ribos-5-yl)-L-homocysteine = (S)-4,5-dihydroxypentane-2,3-dione + L-homocysteine. Functionally, involved in the synthesis of autoinducer 2 (AI-2) which is secreted by bacteria and is used to communicate both the cell density and the metabolic potential of the environment. The regulation of gene expression in response to changes in cell density is called quorum sensing. Catalyzes the transformation of S-ribosylhomocysteine (RHC) to homocysteine (HC) and 4,5-dihydroxy-2,3-pentadione (DPD). The chain is S-ribosylhomocysteine lyase from Enterobacter sp. (strain 638).